Consider the following 492-residue polypeptide: Catalase (492 aa).

Residues histidine 65 and asparagine 138 contribute to the active site. Tyrosine 348 is a heme binding site.

The protein belongs to the catalase family. Homotetramer. Requires heme as cofactor. In terms of tissue distribution, in stems, leaves, roots and developing fruits.

The protein resides in the cytoplasm. Its subcellular location is the cytosol. It localises to the peroxisome matrix. It carries out the reaction 2 H2O2 = O2 + 2 H2O. Its function is as follows. Catalyzes the degradation of hydrogen peroxide (H(2)O(2)) generated by peroxisomal oxidases to water and oxygen, thereby protecting cells from the toxic effects of hydrogen peroxide. This chain is Catalase (CAT), found in Capsicum annuum (Capsicum pepper).